Consider the following 167-residue polypeptide: MDLFLTGTILKPKGLKGEVKVLPVTDFPELFLSRKSYLAGKSDASVMPLNVLKASLSKGFAWLFFEGVDTLEKAEKLSGMHLFVEEKELARQPTGRAYLHELIGMKVLDGNRYEAGVISDILKMPAHEVYEVQANGRKILIPAVEEFVEEIDMAGRYMVVPRFDEFL.

A PRC barrel domain is found at 94-166 (TGRAYLHELI…YMVVPRFDEF (73 aa)).

The protein belongs to the RimM family. Binds ribosomal protein uS19.

It is found in the cytoplasm. In terms of biological role, an accessory protein needed during the final step in the assembly of 30S ribosomal subunit, possibly for assembly of the head region. Essential for efficient processing of 16S rRNA. May be needed both before and after RbfA during the maturation of 16S rRNA. It has affinity for free ribosomal 30S subunits but not for 70S ribosomes. This is Ribosome maturation factor RimM from Chlorobium phaeobacteroides (strain DSM 266 / SMG 266 / 2430).